The chain runs to 565 residues: Oxygen-dependent choline dehydrogenase (565 aa).

D6 to E35 contacts FAD. The active-site Proton acceptor is the H475.

The protein belongs to the GMC oxidoreductase family. It depends on FAD as a cofactor.

The enzyme catalyses choline + A = betaine aldehyde + AH2. It catalyses the reaction betaine aldehyde + NAD(+) + H2O = glycine betaine + NADH + 2 H(+). The protein operates within amine and polyamine biosynthesis; betaine biosynthesis via choline pathway; betaine aldehyde from choline (cytochrome c reductase route): step 1/1. Functionally, involved in the biosynthesis of the osmoprotectant glycine betaine. Catalyzes the oxidation of choline to betaine aldehyde and betaine aldehyde to glycine betaine at the same rate. The protein is Oxygen-dependent choline dehydrogenase of Pseudomonas putida (strain ATCC 700007 / DSM 6899 / JCM 31910 / BCRC 17059 / LMG 24140 / F1).